Reading from the N-terminus, the 258-residue chain is HVA22-like protein j (258 aa).

Residues 153 to 258 (AANQPPTERN…RSNSRTQPAA (106 aa)) form a disordered region. Polar residues predominate over residues 156-169 (QPPTERNVNMNAQS). Over residues 206 to 215 (WPPPTPPPTP) the composition is skewed to pro residues.

It belongs to the DP1 family.

The polypeptide is HVA22-like protein j (HVA22J) (Arabidopsis thaliana (Mouse-ear cress)).